Here is a 25-residue protein sequence, read N- to C-terminus: Endoglucanase 1 (25 aa).

The segment at tyrosine 1 to lysine 25 is disordered. Residues glutamine 10–lysine 25 are compositionally biased toward polar residues.

It carries out the reaction Endohydrolysis of (1-&gt;4)-beta-D-glucosidic linkages in cellulose, lichenin and cereal beta-D-glucans.. This enzyme hydrolyzes cellotetraose, cellopentaose, and cellohexaose to cellobiose and cellotriose but does not hydrolyze cellobiose or cellotriose. This chain is Endoglucanase 1, found in Ruminiclostridium josui (Clostridium josui).